A 155-amino-acid polypeptide reads, in one-letter code: Glutaredoxin-related protein 5, mitochondrial (155 aa).

A mitochondrion-targeting transit peptide spans 1-14 (MNSVFRSTARCLRS). In terms of domain architecture, Glutaredoxin spans 42–145 (QKNLEEMVKK…EELQKLGIRS (104 aa)). Lys-59 is a binding site for glutathione. A [2Fe-2S] cluster-binding site is contributed by Cys-67. Residues 97 to 101 (RQGIK), Ile-109, and 122 to 123 (CD) contribute to the glutathione site.

As to quaternary structure, homodimer.

The protein resides in the mitochondrion. In terms of biological role, monothiol glutaredoxin involved in mitochondrial iron-sulfur (Fe/S) cluster transfer. Receives iron-sulfur clusters from scaffold protein ISCU and mediates their transfer to apoproteins, to the 4Fe/FS cluster biosynthesis machinery, or export from mitochondrion. Required for normal hemoglobin biosynthesis. In Danio rerio (Zebrafish), this protein is Glutaredoxin-related protein 5, mitochondrial (glrx5).